The following is a 122-amino-acid chain: Basic phospholipase A2 LmTX-I (122 aa).

Intrachain disulfides connect C26/C115, C28/C44, C43/C95, C49/C122, C50/C88, and C75/C86. Residues Y27, G29, and G31 each contribute to the Ca(2+) site. H47 is a catalytic residue. Residue D48 coordinates Ca(2+). Residue D89 is part of the active site.

As to quaternary structure, monomer. Ca(2+) serves as cofactor. As to expression, expressed by the venom gland.

It localises to the secreted. It catalyses the reaction a 1,2-diacyl-sn-glycero-3-phosphocholine + H2O = a 1-acyl-sn-glycero-3-phosphocholine + a fatty acid + H(+). Its activity is regulated as follows. Inhibited by Mn(2+), Mg(2+), Zn(2+) and Cu(2+). Its function is as follows. Snake venom phospholipase A2 (PLA2) that displays neurotoxic and myotoxic activities. Induces inflammatory edema by mechanisms involving mast cell activation and arachidonic acid metabolites. Increases plasma creatine kinase activity. PLA2 catalyzes the calcium-dependent hydrolysis of the 2-acyl groups in 3-sn-phosphoglycerides. The protein is Basic phospholipase A2 LmTX-I of Lachesis muta muta (Bushmaster).